Here is a 372-residue protein sequence, read N- to C-terminus: Envelope phospholipase OPG057 (372 aa).

The YPPL signature appears at 153-156 (YPPL). S-palmitoyl cysteine; by host attachment occurs at residues C185 and C186. The PLD phosphodiesterase domain occupies 307 to 334 (FTIQNNTKLLIVDDEYVHITSANFDGTH).

Belongs to the orthopoxvirus OPG057 family. Interacts with protein OPG190. Post-translationally, palmitoylated. Attachment of the palmitate moiety is essential for correct intracellular targeting and protein function.

Its subcellular location is the virion membrane. The protein localises to the host Golgi apparatus. It is found in the host trans-Golgi network. The protein resides in the host endoplasmic reticulum membrane. The catalysed reaction is a 1,2-diacyl-sn-glycero-3-phosphocholine + H2O = a 1,2-diacyl-sn-glycero-3-phosphate + choline + H(+). Major envelope protein that plays a role in the biogenesis of the viral double membrane and in egress of virus from the host cell. Produces the wrapped form of virus that is required for cell-to-cell spread. Acts as a lipase with broad specificity including phospholipase C, phospholipase A, and triacylglycerol lipase activities. The chain is Envelope phospholipase OPG057 (OPG057) from Variola virus (isolate Human/India/Ind3/1967) (VARV).